The sequence spans 458 residues: Argininosuccinate lyase (458 aa).

The protein belongs to the lyase 1 family. Argininosuccinate lyase subfamily.

The protein resides in the cytoplasm. It catalyses the reaction 2-(N(omega)-L-arginino)succinate = fumarate + L-arginine. It participates in amino-acid biosynthesis; L-arginine biosynthesis; L-arginine from L-ornithine and carbamoyl phosphate: step 3/3. The protein is Argininosuccinate lyase of Haemophilus ducreyi (strain 35000HP / ATCC 700724).